The sequence spans 126 residues: Aspartate 1-decarboxylase (126 aa).

Ser-25 (schiff-base intermediate with substrate; via pyruvic acid) is an active-site residue. Ser-25 is subject to Pyruvic acid (Ser). A substrate-binding site is contributed by Thr-57. The active-site Proton donor is Tyr-58. Substrate is bound at residue 73-75 (GGA).

It belongs to the PanD family. Heterooctamer of four alpha and four beta subunits. Pyruvate serves as cofactor. Is synthesized initially as an inactive proenzyme, which is activated by self-cleavage at a specific serine bond to produce a beta-subunit with a hydroxyl group at its C-terminus and an alpha-subunit with a pyruvoyl group at its N-terminus.

The protein localises to the cytoplasm. It carries out the reaction L-aspartate + H(+) = beta-alanine + CO2. It functions in the pathway cofactor biosynthesis; (R)-pantothenate biosynthesis; beta-alanine from L-aspartate: step 1/1. In terms of biological role, catalyzes the pyruvoyl-dependent decarboxylation of aspartate to produce beta-alanine. This chain is Aspartate 1-decarboxylase, found in Xylella fastidiosa (strain 9a5c).